Consider the following 458-residue polypeptide: Ammonium transporter Rh type B (458 aa).

Residues 1–13 (MAGSPSRAAGRRL) are Cytoplasmic-facing. A helical transmembrane segment spans residues 14 to 34 (QLPLLCLFLQGATAVLFAVFV). Topologically, residues 35-61 (RYNHKTDAALWHRGNHSNADNEFYFRY) are extracellular. A glycan (N-linked (GlcNAc...) asparagine) is linked at Asn-49. A helical transmembrane segment spans residues 62-82 (PSFQDVHAMVFVGFGFLMVFL). Topologically, residues 83–86 (QRYG) are cytoplasmic. A helical transmembrane segment spans residues 87 to 107 (FSSVGFTFLLAAFALQWSTLV). Topologically, residues 108–124 (QGFLHSFHSGHIHVGVE) are extracellular. A helical membrane pass occupies residues 125–145 (SMINADFCAGAVLISFGAVLG). Residues 146-149 (KTGP) lie on the Cytoplasmic side of the membrane. A helical membrane pass occupies residues 150–170 (AQLLLMALLEVVLFGINEFVL). At 171 to 178 (LHLLGVRD) the chain is on the extracellular side. Residues 179-201 (AGGSMTIHTFGAYFGLVLSRVLY) traverse the membrane as a helical segment. Residues 202-219 (RPQLEKSKHRQGSVYHSD) lie on the Cytoplasmic side of the membrane. The helical transmembrane segment at 220–240 (LFAMIGTIFLWIFWPSFNSAL) threads the bilayer. Over 241–251 (TALGAGQHRTA) the chain is Extracellular. A helical membrane pass occupies residues 252–272 (LNTYYSLAASTLGTFALSALV). Residues 273 to 282 (GEDGRLDMVH) are Cytoplasmic-facing. The helical transmembrane segment at 283–303 (IQNAALAGGVVVGTSSEMMLT) threads the bilayer. Position 304 (Pro-304) is a topological domain, extracellular. The helical transmembrane segment at 305–325 (FGALAAGFLAGTVSTLGYKFF) threads the bilayer. The Cytoplasmic segment spans residues 326–346 (TPILESKFKVQDTCGVHNLHG). The chain crosses the membrane as a helical span at residues 347 to 367 (MPGVLGALLGVLVAGLATHEA). The Extracellular portion of the chain corresponds to 368–393 (YGDGLESVFPLIAEGQRSATSQAMLQ). A helical transmembrane segment spans residues 394–414 (LFGLFVTLMFASVGGGLGGLL). Residues 415-458 (LKLPFLDSPPDSQCYEDQVHWQVPGEHEDEAQRPLRVEEADTQA) lie on the Cytoplasmic side of the membrane. Residues 416–424 (KLPFLDSPP) are interaction with ANK3. The short motif at 429-432 (YEDQ) is the Basolateral sorting signal element. Residues 439-458 (GEHEDEAQRPLRVEEADTQA) form a disordered region. Basic and acidic residues predominate over residues 444 to 458 (EAQRPLRVEEADTQA).

This sequence belongs to the ammonium transporter (TC 2.A.49) family. Rh subfamily. In terms of assembly, interacts (via C-terminus) with ANK2 and ANK3; required for targeting to the basolateral membrane. In terms of processing, N-glycosylated.

The protein localises to the cell membrane. It localises to the basolateral cell membrane. The catalysed reaction is NH4(+)(in) = NH4(+)(out). The enzyme catalyses methylamine(out) = methylamine(in). It catalyses the reaction CO2(out) = CO2(in). Ammonium transporter involved in the maintenance of acid-base homeostasis. Transports ammonium and its related derivative methylammonium across the basolateral plasma membrane of epithelial cells likely contributing to renal transepithelial ammonia transport and ammonia metabolism. May transport either NH4(+) or NH3 ammonia species predominantly mediating an electrogenic NH4(+) transport. May act as a CO2 channel providing for renal acid secretion. The protein is Ammonium transporter Rh type B (RHBG) of Macaca mulatta (Rhesus macaque).